The sequence spans 276 residues: Small ribosomal subunit protein uS3 (276 aa).

The region spanning 17-86 is the KH type-2 domain; it reads VDEYLAKELD…NPQIDVQDVG (70 aa). The segment at 193-276 is disordered; it reads FQINAPPKEP…AETHGDIQDR (84 aa). Residues 214-227 are compositionally biased toward low complexity; the sequence is EAEPSQAAETQEQQ. 2 stretches are compositionally biased toward basic and acidic residues: residues 228–240 and 258–276; these read AGEK…RLLD and PESR…IQDR.

The protein belongs to the universal ribosomal protein uS3 family. As to quaternary structure, part of the 30S ribosomal subunit.

Its function is as follows. Binds the lower part of the 30S subunit head. The sequence is that of Small ribosomal subunit protein uS3 from Methanothrix thermoacetophila (strain DSM 6194 / JCM 14653 / NBRC 101360 / PT) (Methanosaeta thermophila).